The sequence spans 277 residues: 4-hydroxy-3-methylbut-2-enyl diphosphate reductase (277 aa).

[4Fe-4S] cluster is bound at residue Cys12. (2E)-4-hydroxy-3-methylbut-2-enyl diphosphate contacts are provided by His36 and His70. 2 residues coordinate dimethylallyl diphosphate: His36 and His70. Residues His36 and His70 each contribute to the isopentenyl diphosphate site. Residue Cys92 participates in [4Fe-4S] cluster binding. Residue His120 participates in (2E)-4-hydroxy-3-methylbut-2-enyl diphosphate binding. Position 120 (His120) interacts with dimethylallyl diphosphate. His120 is an isopentenyl diphosphate binding site. The Proton donor role is filled by Glu122. Thr160 contributes to the (2E)-4-hydroxy-3-methylbut-2-enyl diphosphate binding site. Cys188 provides a ligand contact to [4Fe-4S] cluster. Ser216, Ser217, Asn218, and Ser260 together coordinate (2E)-4-hydroxy-3-methylbut-2-enyl diphosphate. Ser216, Ser217, Asn218, and Ser260 together coordinate dimethylallyl diphosphate. Residues Ser216, Ser217, Asn218, and Ser260 each coordinate isopentenyl diphosphate.

Belongs to the IspH family. The cofactor is [4Fe-4S] cluster.

The catalysed reaction is isopentenyl diphosphate + 2 oxidized [2Fe-2S]-[ferredoxin] + H2O = (2E)-4-hydroxy-3-methylbut-2-enyl diphosphate + 2 reduced [2Fe-2S]-[ferredoxin] + 2 H(+). It catalyses the reaction dimethylallyl diphosphate + 2 oxidized [2Fe-2S]-[ferredoxin] + H2O = (2E)-4-hydroxy-3-methylbut-2-enyl diphosphate + 2 reduced [2Fe-2S]-[ferredoxin] + 2 H(+). It participates in isoprenoid biosynthesis; dimethylallyl diphosphate biosynthesis; dimethylallyl diphosphate from (2E)-4-hydroxy-3-methylbutenyl diphosphate: step 1/1. It functions in the pathway isoprenoid biosynthesis; isopentenyl diphosphate biosynthesis via DXP pathway; isopentenyl diphosphate from 1-deoxy-D-xylulose 5-phosphate: step 6/6. Catalyzes the conversion of 1-hydroxy-2-methyl-2-(E)-butenyl 4-diphosphate (HMBPP) into a mixture of isopentenyl diphosphate (IPP) and dimethylallyl diphosphate (DMAPP). Acts in the terminal step of the DOXP/MEP pathway for isoprenoid precursor biosynthesis. This Sulfurovum sp. (strain NBC37-1) protein is 4-hydroxy-3-methylbut-2-enyl diphosphate reductase.